The sequence spans 502 residues: MMKPDLNSPLPQSPQLQAFGSRSSDLATEDLFLKKLEAISQTAPNETVKNEFLNKEIPSINKLFTRFLKNRKKVIDWDKINPPPADMVLNYKDLPAITEQRTSELASKLAVLKLNGGLGTTMGCTGPKSVIEVRSEKTFLDLSVQQIKEMNERYNIKVPLVLMNSFNTHQETGKIIQKYKYSDVKIHSFNQSRFPRILKDNLMPVPDKLFGSDSEWYPPGHGDVFFALQNSGLLETLINEGKEYLFISNVDNLGAVVDFNILEAMDKNKVEYIMEVTNKTRADVKGGTLIQYEGKAKLLEIAQVPSSKVEEFKSIKKFKIFNTNNIWVNLKAMDRILKQNLLDDMDIIINPKVADGKNIIQLEIAAGAAIEFFNNARGVNVPRSRFLPVKSTSDLFIVQSNLYSLEKGVLVMNKNRPFTTVPLVKLGDNFKKVSDYQARIKGIPDILELDQLTVSGDITFGPNMVLKGTVIIVANHGSRIDIPEGSEFENKVVSGNLHCGAL.

The interval 1–20 (MMKPDLNSPLPQSPQLQAFG) is disordered. A compositionally biased stretch (polar residues) spans 9-20 (PLPQSPQLQAFG). UTP contacts are provided by residues 114 to 117 (LNGG), Lys-128, Gln-191, and Gly-220. 116–117 (GG) contacts substrate. Substrate-binding positions include His-221 and 249-251 (NVD). Residues Asp-251 and Lys-390 each coordinate UTP.

It belongs to the UDPGP type 1 family.

It carries out the reaction alpha-D-glucose 1-phosphate + UTP + H(+) = UDP-alpha-D-glucose + diphosphate. Functionally, plays a central role as a glucosyl donor in cellular metabolic pathways. This Dictyostelium discoideum (Social amoeba) protein is UTP--glucose-1-phosphate uridylyltransferase 2 (ugpB).